A 270-amino-acid polypeptide reads, in one-letter code: NAD kinase (270 aa).

The Proton acceptor role is filled by D49. NAD(+) is bound by residues 49 to 50 (DG), R54, 126 to 127 (NE), R152, D154, 165 to 170 (TAYNKS), A189, and Q227.

Belongs to the NAD kinase family. The cofactor is a divalent metal cation.

The protein resides in the cytoplasm. The enzyme catalyses NAD(+) + ATP = ADP + NADP(+) + H(+). Its function is as follows. Involved in the regulation of the intracellular balance of NAD and NADP, and is a key enzyme in the biosynthesis of NADP. Catalyzes specifically the phosphorylation on 2'-hydroxyl of the adenosine moiety of NAD to yield NADP. This Lactococcus lactis subsp. cremoris (strain MG1363) protein is NAD kinase.